Here is a 556-residue protein sequence, read N- to C-terminus: Formate--tetrahydrofolate ligase (556 aa).

65-72 (TPAGEGKS) serves as a coordination point for ATP.

Belongs to the formate--tetrahydrofolate ligase family.

It catalyses the reaction (6S)-5,6,7,8-tetrahydrofolate + formate + ATP = (6R)-10-formyltetrahydrofolate + ADP + phosphate. It functions in the pathway one-carbon metabolism; tetrahydrofolate interconversion. This chain is Formate--tetrahydrofolate ligase, found in Streptococcus agalactiae serotype Ia (strain ATCC 27591 / A909 / CDC SS700).